The following is a 118-amino-acid chain: Ribonuclease P protein component (118 aa).

The protein belongs to the RnpA family. Consists of a catalytic RNA component (M1 or rnpB) and a protein subunit.

It catalyses the reaction Endonucleolytic cleavage of RNA, removing 5'-extranucleotides from tRNA precursor.. Functionally, RNaseP catalyzes the removal of the 5'-leader sequence from pre-tRNA to produce the mature 5'-terminus. It can also cleave other RNA substrates such as 4.5S RNA. The protein component plays an auxiliary but essential role in vivo by binding to the 5'-leader sequence and broadening the substrate specificity of the ribozyme. The polypeptide is Ribonuclease P protein component (Rickettsia rickettsii (strain Iowa)).